Reading from the N-terminus, the 1150-residue chain is Pyruvate carboxylase (1150 aa).

Residues 3–455 (QIKKLLVANR…TTKFIEETPE (453 aa)) form the Biotin carboxylation domain. The ATP site is built by lysine 119, lysine 161, histidine 211, and glutamate 278. The region spanning 123–319 (RTTAIKADLP…IVKTQILVAA (197 aa)) is the ATP-grasp domain. Arginine 294 is a catalytic residue. Residues 533–802 (VLLTDTTFRD…HLRTDIEGME (270 aa)) enclose the Pyruvate carboxyltransferase domain. 541–545 (RDAHQ) serves as a coordination point for substrate. 4 residues coordinate Mn(2+): aspartate 542, lysine 712, histidine 741, and histidine 743. Position 712 is an N6-carboxylysine (lysine 712). The Biotinyl-binding domain occupies 1071 to 1146 (KADKSNPSHI…ATGDLLIEIE (76 aa)). Lysine 1112 carries the post-translational modification N6-biotinyllysine.

In terms of assembly, homotetramer. Biotin is required as a cofactor.

It carries out the reaction hydrogencarbonate + pyruvate + ATP = oxaloacetate + ADP + phosphate + H(+). Catalyzes a 2-step reaction, involving the ATP-dependent carboxylation of the covalently attached biotin in the first step and the transfer of the carboxyl group to pyruvate in the second. The polypeptide is Pyruvate carboxylase (pycA) (Staphylococcus aureus (strain Mu50 / ATCC 700699)).